The chain runs to 225 residues: Vacuolar protein sorting-associated protein 2 homolog 1 (225 aa).

A coiled-coil region spans residues 13–54 (AELLRENKRMLDKSIREIERERQGLQTQEKKLINEIKKTAKQ).

The protein belongs to the SNF7 family. Component of the endosomal sorting required for transport complex III (ESCRT-III), composed at least of VPS2, VPS20, VPS24 and VPS32. Interacts with SKD1.

Its subcellular location is the endosome. Functionally, component of the ESCRT-III complex, which is required for multivesicular bodies (MVBs) formation and sorting of endosomal cargo proteins into MVBs. The ESCRT-III complex is probably involved in the concentration of MVB cargo. The protein is Vacuolar protein sorting-associated protein 2 homolog 1 (VPS2.1) of Arabidopsis thaliana (Mouse-ear cress).